The following is a 442-amino-acid chain: Protein trichome birefringence-like 26 (442 aa).

Residues 51–71 (FFLYFSLVALAYYFIISSLAV) form a helical; Signal-anchor for type II membrane protein membrane-spanning segment. Positions 164–166 (GDS) match the GDS motif motif. The short motif at 409–423 (DCLHWCLPGPIDSWN) is the DCXHWCLPGXXDXWN motif element.

It belongs to the PC-esterase family. TBL subfamily.

The protein resides in the membrane. Functionally, may be involved in the O-acetylation of mannan. May act as a bridging protein that binds pectin and other cell wall polysaccharides. Probably involved in maintaining esterification of pectins. This chain is Protein trichome birefringence-like 26 (TBL26), found in Arabidopsis thaliana (Mouse-ear cress).